Reading from the N-terminus, the 244-residue chain is Putative lipoprotein LprA (244 aa).

A signal peptide spans 1–24 (MKHPPCSVVAAATAILAVVLAIGG). A lipid anchor (N-palmitoyl cysteine) is attached at cysteine 25. A lipid anchor (S-diacylglycerol cysteine) is attached at cysteine 25.

The protein belongs to the LppX/LprAFG lipoprotein family.

Its subcellular location is the cell membrane. This chain is Putative lipoprotein LprA (lprA), found in Mycobacterium bovis (strain ATCC BAA-935 / AF2122/97).